Here is a 258-residue protein sequence, read N- to C-terminus: Ribosomal protein L11 methyltransferase (258 aa).

S-adenosyl-L-methionine contacts are provided by T117, G138, D160, and N201.

It belongs to the methyltransferase superfamily. PrmA family.

The protein resides in the cytoplasm. It catalyses the reaction L-lysyl-[protein] + 3 S-adenosyl-L-methionine = N(6),N(6),N(6)-trimethyl-L-lysyl-[protein] + 3 S-adenosyl-L-homocysteine + 3 H(+). Methylates ribosomal protein L11. This chain is Ribosomal protein L11 methyltransferase, found in Thermosipho melanesiensis (strain DSM 12029 / CIP 104789 / BI429).